Here is a 749-residue protein sequence, read N- to C-terminus: Protein SEY1 homolog 2 (749 aa).

The Cytoplasmic portion of the chain corresponds to 1-671 (MIKNYGDRYH…QKHKQDFLQN (671 aa)). The GB1/RHD3-type G domain occupies 40-265 (GKNYNIVSII…YEKNVRWSDM (226 aa)). 50-57 (GSQSTGKS) contacts GTP. The stretch at 445–465 (NQLKAFVEAQLATFKQQLDNI) forms a coiled coil. The chain crosses the membrane as a helical span at residues 672 to 692 (IPKPFWFLLLFFMYDDVLRWM). At 693 to 695 (GNP) the chain is on the lumenal side. Residues 696–716 (LFLYPILIILCFVGFCIAIGL) traverse the membrane as a helical segment. Residues 717–749 (HSLPKLAFQWVFRTLNQAVIPIIFGGISKLKGS) lie on the Cytoplasmic side of the membrane.

Belongs to the TRAFAC class dynamin-like GTPase superfamily. GB1/RHD3 GTPase family. RHD3 subfamily.

Its subcellular location is the endoplasmic reticulum membrane. In terms of biological role, probable GTP-binding protein that may be involved in cell development. This Paramecium tetraurelia protein is Protein SEY1 homolog 2.